Consider the following 257-residue polypeptide: Snake venom serine protease KN10 (257 aa).

The first 18 residues, 1 to 18 (MVLIRVLANLLILQLSYA), serve as a signal peptide directing secretion. A propeptide spanning residues 19–24 (QKSSEL) is cleaved from the precursor. Residues 25-248 (VVGGDECNIN…HLDWIKSIIA (224 aa)) enclose the Peptidase S1 domain. Cystine bridges form between Cys31–Cys162, Cys49–Cys65, Cys141–Cys209, Cys173–Cys188, and Cys199–Cys224. His64 functions as the Charge relay system in the catalytic mechanism. The N-linked (GlcNAc...) asparagine glycan is linked to Asn102. Asp109 serves as the catalytic Charge relay system. N-linked (GlcNAc...) asparagine glycans are attached at residues Asn120 and Asn121. Catalysis depends on Ser203, which acts as the Charge relay system.

The protein belongs to the peptidase S1 family. Snake venom subfamily. In terms of assembly, monomer. As to expression, expressed by the venom gland.

The protein localises to the secreted. In terms of biological role, snake venom serine protease that may act in the hemostasis system of the prey. The chain is Snake venom serine protease KN10 from Trimeresurus stejnegeri (Chinese green tree viper).